We begin with the raw amino-acid sequence, 205 residues long: MSKRESSKYKIDRRMGENIWGRPKSPVNRREYGPGQHGQRRKGKLSDFGVQLRAKQKLKGYYGDLREKQFRAIFAEADRRKGDTSENLIGLLESRLDAIVYRAKFVPTVFAARQFVNHGHVTVNGVRVNIGSYRCKAGDVIEVREKSKQLVTVLEAVSLAERDVPDYIEVDHNKMVATFGRVPTLSDVPFPVVMEPHLVVEFYSR.

Over residues 1 to 16 (MSKRESSKYKIDRRMG) the composition is skewed to basic and acidic residues. The interval 1-46 (MSKRESSKYKIDRRMGENIWGRPKSPVNRREYGPGQHGQRRKGKLS) is disordered. The S4 RNA-binding domain occupies 94-157 (SRLDAIVYRA…KQLVTVLEAV (64 aa)).

It belongs to the universal ribosomal protein uS4 family. In terms of assembly, part of the 30S ribosomal subunit. Contacts protein S5. The interaction surface between S4 and S5 is involved in control of translational fidelity.

One of the primary rRNA binding proteins, it binds directly to 16S rRNA where it nucleates assembly of the body of the 30S subunit. Functionally, with S5 and S12 plays an important role in translational accuracy. The chain is Small ribosomal subunit protein uS4 from Rhizobium etli (strain CIAT 652).